The sequence spans 158 residues: Endoribonuclease YbeY (158 aa).

3 residues coordinate Zn(2+): H121, H125, and H131.

The protein belongs to the endoribonuclease YbeY family. Requires Zn(2+) as cofactor.

It is found in the cytoplasm. Single strand-specific metallo-endoribonuclease involved in late-stage 70S ribosome quality control and in maturation of the 3' terminus of the 16S rRNA. This Exiguobacterium sp. (strain ATCC BAA-1283 / AT1b) protein is Endoribonuclease YbeY.